Consider the following 535-residue polypeptide: MDHSAKTTQNRVLSVKMWPPSKSTRLMLVERMTKNITTPSIFSRKYGLLSVEEAEQDAKRIEDLAFATANKHFQNEPDGDGTSAVHVYAKESSKLMLDVIKRGPQEESEVEVSKDGDVFFDISGGSRAFIEEEEARDLLRPLADPRNSYTKIRFSNRSFGSEAAKFAASVLSSIKDQLTEVDLSDFVAGRPEAEALEVMNMFSSALEGSKLRYLNLSDNALGEKGIRAFASLINSQHDLEELYLMNDGISEDAARAVRELLPSTDKIRVLQFHNNMTGDEGATAIAEIVRECPSLEDFRCSSTRIGSEGGVALAEALEHCSHLKKLDLRDNMFGVEGGIALAKTLSVLTHLTEIYMSYLNLEDEGTEALSEALLKSAPSLEVLELAGNDITVKSTGNLAACIASKQSLAKLNLSENELKDEGTILIAKAVEGHDQLVEVDLSTNMIRRAGARALAQTVVKKNTFKLLNINGNFISEEGIDEVNDMFKDCLDKLVPLDDNDPEGEDFEDEDEEEEGEDGNELESKLGSLKIKQGEE.

Residues 1 to 115 (MDHSAKTTQN…EESEVEVSKD (115 aa)) are WPP. 9 LRR repeats span residues 208-231 (GSKLRYLNLSDNALGEKGIRAFAS), 236-259 (QHDLEELYLMNDGISEDAARAVRE), 264-287 (TDKIRVLQFHNNMTGDEGATAIAE), 320-343 (CSHLKKLDLRDNMFGVEGGIALAK), 353-376 (EIYMSYLNLEDEGTEALSEALLKS), 377-400 (APSLEVLELAGNDITVKSTGNLAA), 405-428 (KQSLAKLNLSENELKDEGTILIAK), 433-456 (HDQLVEVDLSTNMIRRAGARALAQ), and 461-488 (KNTFKLLNINGNFISEEGIDEVNDMFKD). Residues 493–535 (LVPLDDNDPEGEDFEDEDEEEEGEDGNELESKLGSLKIKQGEE) form a disordered region. The span at 497-520 (DDNDPEGEDFEDEDEEEEGEDGNE) shows a compositional bias: acidic residues.

The protein belongs to the RNA1 family. In terms of assembly, homodimer. Interacts with WIP1 through its WPP domain. Component of Ran complexes at least composed of WIT1 or WIT2, RANGAP1 or RANGAP2, and WIP1 or WIP2 or WIP3. Interacts directly with WIT1, WIP2 and WIP3. Interacts with POK1.

Its subcellular location is the cytoplasm. It localises to the nucleus envelope. The protein localises to the nucleus membrane. It is found in the cytoskeleton. The protein resides in the spindle. Its subcellular location is the phragmoplast. Functionally, GTPase activator for the nuclear Ras-related regulatory protein Ran, converting it to the putatively inactive GDP-bound state. Plays a role in spatial signaling during cell division. This is RAN GTPase-activating protein 1 (RANGAP1) from Arabidopsis thaliana (Mouse-ear cress).